Reading from the N-terminus, the 650-residue chain is DNA ligase (650 aa).

Residues 30 to 34 (DEEYD), 79 to 80 (SL), and D108 each bind NAD(+). K110 (N6-AMP-lysine intermediate) is an active-site residue. Residues R131, E165, and K304 each coordinate NAD(+). 4 residues coordinate Zn(2+): C398, C401, C414, and C419. The region spanning 573 to 650 (PQDSPIAGKS…EEELGEILES (78 aa)) is the BRCT domain.

This sequence belongs to the NAD-dependent DNA ligase family. LigA subfamily. Requires Mg(2+) as cofactor. It depends on Mn(2+) as a cofactor.

The enzyme catalyses NAD(+) + (deoxyribonucleotide)n-3'-hydroxyl + 5'-phospho-(deoxyribonucleotide)m = (deoxyribonucleotide)n+m + AMP + beta-nicotinamide D-nucleotide.. DNA ligase that catalyzes the formation of phosphodiester linkages between 5'-phosphoryl and 3'-hydroxyl groups in double-stranded DNA using NAD as a coenzyme and as the energy source for the reaction. It is essential for DNA replication and repair of damaged DNA. The polypeptide is DNA ligase (Wolinella succinogenes (strain ATCC 29543 / DSM 1740 / CCUG 13145 / JCM 31913 / LMG 7466 / NCTC 11488 / FDC 602W) (Vibrio succinogenes)).